The primary structure comprises 292 residues: 33 kDa chaperonin (292 aa).

Disulfide bonds link Cys238/Cys240 and Cys271/Cys274.

Belongs to the HSP33 family. Post-translationally, under oxidizing conditions two disulfide bonds are formed involving the reactive cysteines. Under reducing conditions zinc is bound to the reactive cysteines and the protein is inactive.

Its subcellular location is the cytoplasm. Redox regulated molecular chaperone. Protects both thermally unfolding and oxidatively damaged proteins from irreversible aggregation. Plays an important role in the bacterial defense system toward oxidative stress. The polypeptide is 33 kDa chaperonin (Alkaliphilus metalliredigens (strain QYMF)).